We begin with the raw amino-acid sequence, 83 residues long: MKTLLLTLVVVTIVCLDLGYTRICFNHQSSQPQTTKTCSPGESSCYHKQWSDFRGTIIERGCGCPTVKPGINLSCCESEVCNN.

Positions Met1–Thr21 are cleaved as a signal peptide. Positions Cys24 to Cys38 are loop I. Cystine bridges form between Cys24–Cys45, Cys38–Cys62, Cys64–Cys75, and Cys76–Cys81. The tract at residues Ser39–Ser44 is stretch between loop I and loop II. Positions Cys45–Cys62 are loop II. The loop III stretch occupies residues Cys64–Cys75.

Belongs to the three-finger toxin family. Short-chain subfamily. Type I alpha-neurotoxin sub-subfamily. In terms of tissue distribution, expressed by the venom gland.

It is found in the secreted. Functionally, binds to muscle nicotinic acetylcholine receptor (nAChR) and inhibit acetylcholine from binding to the receptor, thereby impairing neuromuscular transmission. Binds to Torpedo marmorata nAChR (Kd=0.14 nM). This chain is Erabutoxin c, found in Laticauda semifasciata (Black-banded sea krait).